Here is a 520-residue protein sequence, read N- to C-terminus: Laccase-1 (520 aa).

The signal sequence occupies residues 1–21 (MSRFHSLLAFVVASLTAVAHA). 2 Plastocyanin-like domains span residues 23–148 (IGPV…FVVY) and 160–302 (VDND…ILRY). 2 N-linked (GlcNAc...) asparagine glycosylation sites follow: Asn-72 and Asn-75. 4 residues coordinate Cu cation: His-85, His-87, His-130, and His-132. 2 disulfides stabilise this stretch: Cys-106–Cys-509 and Cys-138–Cys-226. Asn-229, Asn-238, Asn-354, and Asn-361 each carry an N-linked (GlcNAc...) asparagine glycan. A Plastocyanin-like 3 domain is found at 369–491 (TVPVLLQIIS…AGFAVVFAED (123 aa)). Cu cation is bound by residues His-416, His-419, His-421, His-473, Cys-474, His-475, and His-479.

It belongs to the multicopper oxidase family. As to quaternary structure, homodimer. Cu cation is required as a cofactor.

It is found in the secreted. The catalysed reaction is 4 hydroquinone + O2 = 4 benzosemiquinone + 2 H2O. Its function is as follows. Lignin degradation and detoxification of lignin-derived products. This chain is Laccase-1, found in Trametes villosa (White-rot fungus).